We begin with the raw amino-acid sequence, 216 residues long: Deoxyribose-phosphate aldolase (216 aa).

The Proton donor/acceptor role is filled by Asp89. Catalysis depends on Lys152, which acts as the Schiff-base intermediate with acetaldehyde. The active-site Proton donor/acceptor is Lys181.

Belongs to the DeoC/FbaB aldolase family. DeoC type 1 subfamily.

It is found in the cytoplasm. It catalyses the reaction 2-deoxy-D-ribose 5-phosphate = D-glyceraldehyde 3-phosphate + acetaldehyde. It participates in carbohydrate degradation; 2-deoxy-D-ribose 1-phosphate degradation; D-glyceraldehyde 3-phosphate and acetaldehyde from 2-deoxy-alpha-D-ribose 1-phosphate: step 2/2. Functionally, catalyzes a reversible aldol reaction between acetaldehyde and D-glyceraldehyde 3-phosphate to generate 2-deoxy-D-ribose 5-phosphate. The protein is Deoxyribose-phosphate aldolase of Clostridium tetani (strain Massachusetts / E88).